The sequence spans 239 residues: Ribonuclease PH (239 aa).

Residues Arg86 and 124 to 126 (GTR) contribute to the phosphate site.

The protein belongs to the RNase PH family. In terms of assembly, homohexameric ring arranged as a trimer of dimers.

The catalysed reaction is tRNA(n+1) + phosphate = tRNA(n) + a ribonucleoside 5'-diphosphate. In terms of biological role, phosphorolytic 3'-5' exoribonuclease that plays an important role in tRNA 3'-end maturation. Removes nucleotide residues following the 3'-CCA terminus of tRNAs; can also add nucleotides to the ends of RNA molecules by using nucleoside diphosphates as substrates, but this may not be physiologically important. Probably plays a role in initiation of 16S rRNA degradation (leading to ribosome degradation) during starvation. The sequence is that of Ribonuclease PH from Marinomonas sp. (strain MWYL1).